Here is a 31-residue protein sequence, read N- to C-terminus: Dermaseptin-7.1TR (31 aa).

The residue at position 31 (glutamine 31) is a Glutamine amide.

In terms of tissue distribution, expressed by the skin glands.

It localises to the secreted. Its function is as follows. Has antimicrobial activity. The sequence is that of Dermaseptin-7.1TR from Phyllomedusa trinitatis (Trinidad leaf frog).